The sequence spans 1641 residues: Cortactin-binding protein 2 (1641 aa).

Residues 1–27 (MATDGASCEPDFSRAPEDAAGAPAEAA) form a disordered region. Positions 119 to 276 (RKMQERMSTQ…EQLKRGNDSK (158 aa)) form a coiled coil. 3 disordered regions span residues 361–433 (SHGD…HPGL), 446–472 (GSNA…PTSR), and 488–588 (ALSR…PQGN). Residues 385 to 405 (GPSTGSTPDLTSSPTALPSTV) are compositionally biased toward polar residues. Arginine 491 is subject to Asymmetric dimethylarginine. A compositionally biased stretch (pro residues) spans 497–506 (AGAPPRPGAP). Residues 576 to 586 (TVASSPSSLPQ) are compositionally biased toward polar residues. ANK repeat units follow at residues 702-732 (GRPT…DINY), 736-765 (DGHS…QVNA), 769-798 (NGFT…NINH), 802-831 (GGQT…DRSV), 835-864 (DGWT…PAHG), and 903-933 (EGWT…EPER). A disordered region spans residues 1442–1468 (AWRKVSTSPRKKSGRFSSPTWNKPDLS). Phosphoserine is present on serine 1512. Residues 1544–1641 (LRRFDSSGNN…NSRDLEPTQK (98 aa)) form a disordered region. 2 stretches are compositionally biased toward polar residues: residues 1551–1562 (GNNPVFSATVNN) and 1570–1579 (KEVSPLSSHQ). The segment covering 1580 to 1590 (MTERSNSKSKT) has biased composition (basic and acidic residues). Residues 1612–1626 (SQNTKRSSSSSNTRQ) show a composition bias toward low complexity.

As to quaternary structure, interacts with CTTN/cortactin SH3 domain. Interacts with STRN, STRN4/zinedin and MOB4/phocein; this interactions mediate the association with the STRIPAK core complex and may regulate dendritic spine distribution of the STRIPAK complex in hippocampal neurons. Activation of glutamate receptors weakens the interaction with STRN and STRN4.

The protein localises to the cytoplasm. Its subcellular location is the cell cortex. It is found in the cell projection. It localises to the dendritic spine. In terms of biological role, regulates the dendritic spine distribution of CTTN/cortactin in hippocampal neurons, and thus controls dendritic spinogenesis and dendritic spine maintenance. Associates with the striatin-interacting phosphatase and kinase (STRIPAK) core complex to regulate dendritic spine distribution of the STRIPAK complex in hippocampal neurons. The sequence is that of Cortactin-binding protein 2 (CTTNBP2) from Ovis aries (Sheep).